Here is a 305-residue protein sequence, read N- to C-terminus: UPF0282 protein Pisl_0021 (305 aa).

The protein belongs to the UPF0282 family.

This chain is UPF0282 protein Pisl_0021, found in Pyrobaculum islandicum (strain DSM 4184 / JCM 9189 / GEO3).